The chain runs to 468 residues: PE family protein PE3 (468 aa).

The PE domain occupies M1–A92. Residues P154–Y375 enclose the PE-PPE domain.

Belongs to the mycobacterial PE family.

The protein localises to the secreted. It localises to the cell wall. Functionally, plays significant roles in mycobacterial persistence during infection and modulates host immune response. This Mycobacterium tuberculosis (strain ATCC 25618 / H37Rv) protein is PE family protein PE3.